We begin with the raw amino-acid sequence, 566 residues long: MSPPGSAAGESAAGGGGGGGGPGVSEELTAAAAAAAADEGPAREEQRPIQPSFTKSLCRESHWKCLLLSLLMYGCLGAVAWCHVTTVTRLTFSSAYQGNSLMYHDSPCSNGYVYIPLAFLLMLYAVYLVECWHCQARHELQHRVDVSSVRERVGRMQQATPCIWWKAISYHYVRRTRQVTRYRNGDAYTTTQVYHERVNTHVAEAEFDYARCGVRDVSKTLVGLEGAPATRLRFTKCFSFASVEAENAYLCQRARFFAENEGLDDYMEAREGMHLKNVDFREFMVAFPDPARPPWYACSSAFWAAALLTLSWPLRVLAEYRTAYAHYHVEKLFGLEGPGSASSAGGGLSPSDELLPPLTHRLPRVNTVDSTELEWHIRSNQQLVPSYSEAVLMDLAGLGTRCGGAGGGYAPSCRYGGVGGPGAAGVAPYRRSCEHCQRAVSSSSIFSRSALSICASPRAGPGPGGGAGCGGSRFSLGRLYGSRRSCLWRSRSGSVNEASCPTEQTRLSSQASMGDDEDDDEEEAGPPPPYHDALYFPVLIVHRQEGCLGHSHRPLHRHGSCVETSL.

Low complexity predominate over residues 1-11 (MSPPGSAAGES). Positions 1 to 25 (MSPPGSAAGESAAGGGGGGGGPGVS) are disordered. Over residues 12–23 (AAGGGGGGGGPG) the composition is skewed to gly residues. Helical transmembrane passes span 65–85 (CLLLSLLMYGCLGAVAWCHVT) and 112–132 (YVYIPLAFLLMLYAVYLVECW). Over residues 495-512 (VNEASCPTEQTRLSSQAS) the composition is skewed to polar residues. The segment at 495 to 529 (VNEASCPTEQTRLSSQASMGDDEDDDEEEAGPPPP) is disordered. The segment covering 514-524 (GDDEDDDEEEA) has biased composition (acidic residues).

This sequence belongs to the TMEM151 family.

Its subcellular location is the membrane. The chain is Transmembrane protein 151B (TMEM151B) from Homo sapiens (Human).